The sequence spans 213 residues: MMIRDLGKLEFEAALAIQEQLAAGVAAGTSPETLLLLEHPPVYTIGRGGCRENVLDPGIRVVEANRGGDVTFHGPGQLVGYPVIDLGRRGRDLHRYLRILEELLINVAAEFGVAARREPGRTGIWTDGGKLASIGVGVRRWVTMHGFALNVTNELAPFRSINPCGIVACPITSLSAILGRPVPLGDVRRSVAGRFPFLLDERLPFLETAEPAP.

Residues 28-203 form the BPL/LPL catalytic domain; the sequence is GTSPETLLLL…RFPFLLDERL (176 aa). Residues 66 to 73, 133 to 135, and 146 to 148 contribute to the substrate site; these read RGGDVTFH, SIG, and GFA. Cys164 (acyl-thioester intermediate) is an active-site residue.

This sequence belongs to the LipB family.

It is found in the cytoplasm. It catalyses the reaction octanoyl-[ACP] + L-lysyl-[protein] = N(6)-octanoyl-L-lysyl-[protein] + holo-[ACP] + H(+). It participates in protein modification; protein lipoylation via endogenous pathway; protein N(6)-(lipoyl)lysine from octanoyl-[acyl-carrier-protein]: step 1/2. Functionally, catalyzes the transfer of endogenously produced octanoic acid from octanoyl-acyl-carrier-protein onto the lipoyl domains of lipoate-dependent enzymes. Lipoyl-ACP can also act as a substrate although octanoyl-ACP is likely to be the physiological substrate. In Geobacter metallireducens (strain ATCC 53774 / DSM 7210 / GS-15), this protein is Octanoyltransferase.